Here is a 480-residue protein sequence, read N- to C-terminus: Wax ester synthase/diacylglycerol acyltransferase 7 (480 aa).

Topologically, residues 1 to 193 are cytoplasmic; it reads MTYGEEEPVS…LRSIFTIGST (193 aa). The Proton acceptor role is filled by H135. The chain crosses the membrane as a helical span at residues 194–214; the sequence is MRLLWNTTIDMLLLLATVLFL. Topologically, residues 215–329 are lumenal; it reads KDTKTPLKAG…VKDSKCRWGN (115 aa). N-linked (GlcNAc...) asparagine glycosylation occurs at N252. A helical membrane pass occupies residues 330–350; that stretch reads YFSFIFLPFTIGLQTDPLVYL. At 351–365 the chain is on the cytoplasmic side; the sequence is KMSKSMMARKKHSYH. The chain crosses the membrane as a helical span at residues 366 to 386; that stretch reads AALVYFIIKIVLKVFGAKAAA. At 387 to 480 the chain is on the lumenal side; the sequence is ELFDRPVRNT…KASLCERGLL (94 aa). The N-linked (GlcNAc...) asparagine glycan is linked to N395.

This sequence in the N-terminal section; belongs to the long-chain O-acyltransferase family. In terms of tissue distribution, expressed in roots, stems, leaves, flowers and siliques.

It localises to the cell membrane. The protein resides in the endoplasmic reticulum membrane. It is found in the golgi apparatus membrane. It carries out the reaction an acyl-CoA + a 1,2-diacyl-sn-glycerol = a triacyl-sn-glycerol + CoA. The catalysed reaction is a long chain fatty alcohol + a fatty acyl-CoA = a wax ester + CoA. Its pathway is glycerolipid metabolism; triacylglycerol biosynthesis. It participates in lipid metabolism. Its function is as follows. Bifunctional wax ester synthase/diacylglycerol acyltransferase that uses acyl-CoAs with 14, 16 and 18 carbons as substrates, preferably in combination with 16:0ol alcohol. Involved in cuticular wax biosynthesis. The polypeptide is Wax ester synthase/diacylglycerol acyltransferase 7 (Arabidopsis thaliana (Mouse-ear cress)).